A 254-amino-acid chain; its full sequence is Low affinity immunoglobulin gamma Fc region receptor III-A (254 aa).

The signal sequence occupies residues 1–20; sequence MWHLLPPSALLLLISSVTKA. The Extracellular portion of the chain corresponds to 21 to 209; the sequence is ADPSKAVVLL…IAPLFPLWQQ (189 aa). 2 consecutive Ig-like C2-type domains span residues 23 to 104 and 121 to 174; these read PSKA…VQLQ and KGES…YYCR. N-linked (GlcNAc...) asparagine glycosylation is found at Asn-42, Asn-63, Asn-166, and Asn-181. Intrachain disulfides connect Cys-47-Cys-90 and Cys-129-Cys-173. Residues 210-230 form a helical membrane-spanning segment; sequence IAFCLMMGLLFAVDTGLYFFV. At 231–254 the chain is on the cytoplasmic side; it reads RRDLRRSMVHKEEYNFKWSQAQDK.

Forms a heterooligomeric complex with ITAM-containing signaling subunits FCER1G. Interacts (via transmembrane domain) with signaling subunits; this interaction is a prerequisite for receptor complex expression on the cell surface and intracellular signal transduction. Binds the Fc region of antigen-complexed IgG. In terms of processing, N-glycosylated. Phosphorylated following receptor ligation.

Its subcellular location is the cell membrane. Functionally, receptor for the invariable Fc fragment of immunoglobulin gamma (IgG). Binds with intermediate affinity to both IgG2a and IgG2b. Can bind to IgG2a and IgG2b monomers. Does not display binding to IgG1 or IgG3. Recognizes neutralizing virus-specific IgGs displayed on the cell surface of infected cells and triggers antibody-dependent cellular cytotoxicity (ADCC). Confers protection to lethal influenza virus infection. On splenic dendritic cells, uptakes antigen immune complexes and efficiently divert them into MHC class I and II antigen presentation pathways to provide for superior priming of CD4-positive and CD8-positive T cell immune responses. Mediates neutrophil activation by IgG complexes redundantly with FCGR2A. Plays a role in promoting bone resorption by enhancing osteoclast differentiation following binding to IgG2a. Also acts as a receptor for the Fc region of immunoglobulin epsilon (IgE). Binds with low affinity to both the a and b allotypes of IgE. Has also been shown to bind to IgE allotype a only but not to allotype b. Binds aggregated IgE but not the monomeric form and bound monomeric IgG is readily displaced by IgE complexes. Binding to IgE promotes macrophage-mediated phagocytosis, antigen presentation to T cells, production of pro-inflammatory cytokines and the late phase of cutaneous allergic reactions. Mediates enhanced ADCC in response to afucosylated IgGs. In Cavia porcellus (Guinea pig), this protein is Low affinity immunoglobulin gamma Fc region receptor III-A.